A 578-amino-acid chain; its full sequence is MGRRPRGPGSPRGPGPPRPGPGLPPLLLVLALAAHGGCAAPAPRAEDLSLGVEWLSRFGYLPPADPASGQLQTQEELSKAITAMQQFGGLETTGILDEATLALMKTPRCSLPDLPPGAQSRRKRQTPPPTKWSKRNLSWRVRTFPRDSPLGRDTVRALMYYALKVWSDITPLNFHEVAGNAADIQIDFSKADHNDGYPFDGPGGTVAHAFFPGDHHTAGDTHFDDDEPWTFRSSDAHGMDLFAVAVHEFGHAIGLSHVAAPSSIMQPYYQGPVGDPLRYGLPYEDRVRVWQLYGVRESVSPTAQLDTPEPEEPPLLPEPPNNRSSTPPQKDVPHRCTAHFDAVAQIRGEAFFFKGKYFWRLTRDRHLVSLQPAQMHRFWRGLPLHLDSVDAVYERTSDHKIVFFKGDRYWVFKDNNVEEGYPRPVSDFSLPPGGIDAVFSWAHNDRTYFFKDQLYWRYDDHTRRMDPGYPAQGPLWRGVPSMLDDAMRWSDGASYFFRGQEYWKVLDGELEAAPGYPQSTARDWLVCGEPLADAEDVGPGPQGRSGAQDGLAVCSCTSDAHRLALPSLLLLTPLLWGL.

Disordered stretches follow at residues 1–22 (MGRRPRGPGSPRGPGPPRPGPG) and 107–133 (PRCSLPDLPPGAQSRRKRQTPPPTKWS). A signal peptide spans 1 to 39 (MGRRPRGPGSPRGPGPPRPGPGLPPLLLVLALAAHGGCA). Pro residues predominate over residues 11 to 22 (PRGPGPPRPGPG). The propeptide occupies 40-124 (APAPRAEDLS…PPGAQSRRKR (85 aa)). A Cysteine switch motif is present at residues 107–114 (PRCSLPDL). C109 is a Zn(2+) binding site. An N-linked (GlcNAc...) asparagine glycan is attached at N136. Residue H247 participates in Zn(2+) binding. E248 is a catalytic residue. H251 and H257 together coordinate Zn(2+). The tract at residues 301–334 (PTAQLDTPEPEEPPLLPEPPNNRSSTPPQKDVPH) is disordered. The N-linked (GlcNAc...) asparagine glycan is linked to N322. Hemopexin repeat units follow at residues 333–382 (PHRC…WRGL), 386–432 (LDSV…SLPP), 436–479 (DAVF…WRGV), and 480–527 (PSML…WLVC). A disulfide bond links C336 and C527. The GPI-anchor amidated serine moiety is linked to residue S558. The propeptide at 559 to 578 (DAHRLALPSLLLLTPLLWGL) is removed in mature form.

Belongs to the peptidase M10A family. Zn(2+) serves as cofactor. The cofactor is Ca(2+). In terms of processing, the precursor is cleaved by a furin endopeptidase. In terms of tissue distribution, expressed by monocytes and macrophages.

The protein resides in the cell membrane. It localises to the secreted. It is found in the extracellular space. Its subcellular location is the extracellular matrix. In terms of biological role, endopeptidase that degrades various components of the extracellular matrix, such as fibrin. May be involved in the activation of membrane-bound precursors of growth factors or inflammatory mediators, such as tumor necrosis factor-alpha. May also be involved in tumoral process. Not obvious if able to proteolytically activate progelatinase A. Does not hydrolyze collagen types I, II, III, IV and V, gelatin, fibronectin, laminin, decorin nor alpha1-antitrypsin. The polypeptide is Matrix metalloproteinase-17 (Mmp17) (Mus musculus (Mouse)).